Here is a 567-residue protein sequence, read N- to C-terminus: Mitochondrial distribution and morphology protein 34 (567 aa).

The region spanning M1–R224 is the SMP-LTD domain. A compositionally biased stretch (polar residues) spans N392–A416. The disordered stretch occupies residues N392–I453. The span at T417–S452 shows a compositional bias: low complexity.

This sequence belongs to the MDM34 family. In terms of assembly, component of the ER-mitochondria encounter structure (ERMES) or MDM complex, composed of MMM1, MDM10, MDM12 and MDM34.

Its subcellular location is the mitochondrion outer membrane. In terms of biological role, component of the ERMES/MDM complex, which serves as a molecular tether to connect the endoplasmic reticulum (ER) and mitochondria. Components of this complex are involved in the control of mitochondrial shape and protein biogenesis, and function in nonvesicular lipid trafficking between the ER and mitochondria. MDM34 is required for the interaction of the ER-resident membrane protein MMM1 and the outer mitochondrial membrane-resident beta-barrel protein MDM10. The chain is Mitochondrial distribution and morphology protein 34 from Vanderwaltozyma polyspora (strain ATCC 22028 / DSM 70294 / BCRC 21397 / CBS 2163 / NBRC 10782 / NRRL Y-8283 / UCD 57-17) (Kluyveromyces polysporus).